Here is a 906-residue protein sequence, read N- to C-terminus: Cadherin-2 (906 aa).

The signal sequence occupies residues 1 to 25 (MCRIAGAPRTLLPLLAALLQASVEA). Positions 26–159 (SGEIALCKTG…HSGHLQRQKR (134 aa)) are excised as a propeptide. Phosphoserine occurs at positions 96 and 135. Cadherin domains lie at 160–267 (DWVI…RPEF), 268–382 (LHQV…PPEF), 383–497 (TAMT…NPYF), 498–603 (APNP…DNAP), and 604–714 (QVLP…DVDR). Topologically, residues 160 to 724 (DWVIPPINLP…IVGAGLGTGA (565 aa)) are extracellular. Residue Glu-170 coordinates Ca(2+). Residue Asn-190 is glycosylated (N-linked (GlcNAc...) asparagine). Residues Asp-226, Glu-228, Asp-259, Met-260, Asn-261, Asp-262, and Asn-263 each coordinate Ca(2+). A glycan (N-linked (GlcNAc...) asparagine) is linked at Asn-273. The Ca(2+) site is built by Asp-293, Asp-295, and Asn-301. N-linked (GlcNAc...) asparagine glycosylation is present at Asn-325. Position 353 (Asp-353) interacts with Ca(2+). Asn-402, Asn-572, Asn-622, Asn-651, and Asn-692 each carry an N-linked (GlcNAc...) asparagine glycan. A helical membrane pass occupies residues 725–745 (IIAILLCIIILLILVLMFVVW). The Cytoplasmic portion of the chain corresponds to 746-906 (MKRRDKERQA…LADMYGGGDD (161 aa)). The span at 863 to 880 (SGSTAGSLSSLNSSSSGG) shows a compositional bias: low complexity. The disordered stretch occupies residues 863–884 (SGSTAGSLSSLNSSSSGGEQDY).

As to quaternary structure, homodimer (via extracellular region). Can also form heterodimers with other cadherins (via extracellular region). Dimerization occurs in trans, i.e. with a cadherin chain from another cell. Interacts with CDCP1. Interacts with PCDH8; this complex may also include TAOK2. The interaction with PCDH8 may lead to internalization through TAOK2/p38 MAPK pathway. Identified in a complex containing FGFR4, NCAM1, CDH2, PLCG1, FRS2, SRC, SHC1, GAP43 and CTTN. May interact with OBSCN (via protein kinase domain 2). Interacts with FBXO45. In terms of processing, cleaved by MMP24. Ectodomain cleavage leads to the generation of a soluble 90 kDa N-terminal soluble fragment and a 45 kDa membrane-bound C-terminal fragment 1 (CTF1), which is further cleaved by gamma-secretase into a 35 kDa. Cleavage in neural stem cells by MMP24 affects CDH2-mediated anchorage of neural stem cells to ependymocytes in the adult subependymal zone, leading to modulate neural stem cell quiescence.

The protein localises to the cell membrane. It localises to the sarcolemma. The protein resides in the cell junction. Its subcellular location is the cell surface. It is found in the desmosome. The protein localises to the adherens junction. Calcium-dependent cell adhesion protein; preferentially mediates homotypic cell-cell adhesion by dimerization with a CDH2 chain from another cell. Cadherins may thus contribute to the sorting of heterogeneous cell types. Acts as a regulator of neural stem cells quiescence by mediating anchorage of neural stem cells to ependymocytes in the adult subependymal zone: upon cleavage by MMP24, CDH2-mediated anchorage is affected, leading to modulate neural stem cell quiescence. Plays a role in cell-to-cell junction formation between pancreatic beta cells and neural crest stem (NCS) cells, promoting the formation of processes by NCS cells. Required for proper neurite branching. Required for pre- and postsynaptic organization. CDH2 may be involved in neuronal recognition mechanism. In hippocampal neurons, may regulate dendritic spine density. The polypeptide is Cadherin-2 (CDH2) (Callithrix jacchus (White-tufted-ear marmoset)).